The following is a 432-amino-acid chain: MEKITLAPISAVEGTINLPGSKSLSNRALLLAALAKGTTKVTNLLDSDDIRHMLNALKALGVRYQLSDDKTICEVEGLGGTFNIQDNLSLFLGNAGTAMRPLTAALCLKGKTESEIILTGEPRMKERPILHLVDALRQAGADIRYLENEGYPPLAIRNKGIKGGKVKIDGSISSQFLTALLMSAPLAENDTEIEIIGELVSKPYIDITLAMMRDFGVQVENHHYQKFQVKGNQSYISPNKYLVEGDASSASYFLAAGAIKGKVKVTGIGKNSIQGDRLFADVLEKMGAKITWGEDFIQAEHAELNGIDMDMNHIPDAAMTIATTALFANSETVIRNIYNWRVKETDRLTAMATELRKVGAEVEGGEDFIRIQPLPLNQFKHANIETYNDHRMAMCFSLIALSNTPVTILDPKCTAKTFPTFFNEFEKICLKN.

3-phosphoshikimate-binding residues include lysine 22, serine 23, and arginine 27. Lysine 22 is a phosphoenolpyruvate binding site. Positions 96 and 127 each coordinate phosphoenolpyruvate. The 3-phosphoshikimate site is built by serine 173, serine 174, glutamine 175, serine 201, aspartate 316, asparagine 339, and lysine 343. Glutamine 175 serves as a coordination point for phosphoenolpyruvate. The Proton acceptor role is filled by aspartate 316. Phosphoenolpyruvate contacts are provided by arginine 347, arginine 391, and lysine 416.

It belongs to the EPSP synthase family. As to quaternary structure, monomer.

It localises to the cytoplasm. It catalyses the reaction 3-phosphoshikimate + phosphoenolpyruvate = 5-O-(1-carboxyvinyl)-3-phosphoshikimate + phosphate. It participates in metabolic intermediate biosynthesis; chorismate biosynthesis; chorismate from D-erythrose 4-phosphate and phosphoenolpyruvate: step 6/7. Its function is as follows. Catalyzes the transfer of the enolpyruvyl moiety of phosphoenolpyruvate (PEP) to the 5-hydroxyl of shikimate-3-phosphate (S3P) to produce enolpyruvyl shikimate-3-phosphate and inorganic phosphate. This chain is 3-phosphoshikimate 1-carboxyvinyltransferase, found in Haemophilus influenzae (strain ATCC 51907 / DSM 11121 / KW20 / Rd).